The chain runs to 601 residues: Bifunctional protein GlmU (601 aa).

Residues 1–375 (MKSDLAIVIL…SELLLGVNNR (375 aa)) form a pyrophosphorylase region. UDP-N-acetyl-alpha-D-glucosamine is bound by residues 10-13 (LAAG), K24, Q75, and 81-82 (GT). D165 lines the Mg(2+) pocket. 4 residues coordinate UDP-N-acetyl-alpha-D-glucosamine: G201, E216, N230, and N373. Residue N373 coordinates Mg(2+). Residues 376–396 (VQLAKTEKILNDQIIKRWQLY) are linker. Residues 397-601 (GVTIKSPETT…PKWAENRGDG (205 aa)) form an N-acetyltransferase region. 2 residues coordinate UDP-N-acetyl-alpha-D-glucosamine: R478 and K496. H508 serves as the catalytic Proton acceptor. Residues Y511 and N522 each coordinate UDP-N-acetyl-alpha-D-glucosamine. Acetyl-CoA-binding positions include A525, 531–532 (NY), and A568.

It in the N-terminal section; belongs to the N-acetylglucosamine-1-phosphate uridyltransferase family. The protein in the C-terminal section; belongs to the transferase hexapeptide repeat family. In terms of assembly, homotrimer. Mg(2+) is required as a cofactor.

The protein localises to the cytoplasm. The catalysed reaction is alpha-D-glucosamine 1-phosphate + acetyl-CoA = N-acetyl-alpha-D-glucosamine 1-phosphate + CoA + H(+). It catalyses the reaction N-acetyl-alpha-D-glucosamine 1-phosphate + UTP + H(+) = UDP-N-acetyl-alpha-D-glucosamine + diphosphate. It functions in the pathway nucleotide-sugar biosynthesis; UDP-N-acetyl-alpha-D-glucosamine biosynthesis; N-acetyl-alpha-D-glucosamine 1-phosphate from alpha-D-glucosamine 6-phosphate (route II): step 2/2. The protein operates within nucleotide-sugar biosynthesis; UDP-N-acetyl-alpha-D-glucosamine biosynthesis; UDP-N-acetyl-alpha-D-glucosamine from N-acetyl-alpha-D-glucosamine 1-phosphate: step 1/1. It participates in bacterial outer membrane biogenesis; LPS lipid A biosynthesis. Its function is as follows. Catalyzes the last two sequential reactions in the de novo biosynthetic pathway for UDP-N-acetylglucosamine (UDP-GlcNAc). The C-terminal domain catalyzes the transfer of acetyl group from acetyl coenzyme A to glucosamine-1-phosphate (GlcN-1-P) to produce N-acetylglucosamine-1-phosphate (GlcNAc-1-P), which is converted into UDP-GlcNAc by the transfer of uridine 5-monophosphate (from uridine 5-triphosphate), a reaction catalyzed by the N-terminal domain. The polypeptide is Bifunctional protein GlmU (Tropheryma whipplei (strain TW08/27) (Whipple's bacillus)).